Reading from the N-terminus, the 192-residue chain is Interleukin-18 (192 aa).

Positions 1-35 (MAAEPVEDNCISFVEMKFINNTLYFVAENGDLESD) are excised as a propeptide.

Belongs to the IL-1 family. In terms of assembly, forms a ternary complex with ligand-binding receptor subunit IL18R1 and signaling receptor subunit IL18RAP at the plasma membrane. Mature IL18 first binds to IL18R1 forming a low affinity binary complex, which then interacts with IL18RAP to form a high affinity ternary complex that signals inside the cell. Interacts with cargo receptor TMED10; the interaction mediates the translocation from the cytoplasm into the ERGIC (endoplasmic reticulum-Golgi intermediate compartment) and thereby secretion. In terms of processing, the pro-IL-18 precursor is processed by CASP1, CASP4 or CASP5 to yield its mature, active form. The pro-IL-18 precursor features autoinhibitory interactions between the propeptide and the post-cleavage-site region, preventing recognition by the IL18R1 receptor. Processing by CASP1, CASP4 or CASP5 induces conformational changes to generate critical receptor-binding sites. The mature form is then secreted and released in the extracellular milieu by passing through the gasdermin-D (GSDMD) pore. In contrast, cleavage by CASP3 inactivates IL18.

Its subcellular location is the cytoplasm. It localises to the cytosol. It is found in the secreted. Pro-inflammatory cytokine primarily involved in epithelial barrier repair, polarized T-helper 1 (Th1) cell and natural killer (NK) cell immune responses. Upon binding to IL18R1 and IL18RAP, forms a signaling ternary complex which activates NF-kappa-B, triggering synthesis of inflammatory mediators. Synergizes with IL12/interleukin-12 to induce IFNG synthesis from T-helper 1 (Th1) cells and natural killer (NK) cells. Involved in transduction of inflammation downstream of pyroptosis: its mature form is specifically released in the extracellular milieu by passing through the gasdermin-D (GSDMD) pore. The polypeptide is Interleukin-18 (IL18) (Capra hircus (Goat)).